The following is a 21-amino-acid chain: Ocellatin-4 (21 aa).

At isoleucine 21 the chain carries Isoleucine amide.

In terms of tissue distribution, expressed by the skin dorsal glands.

The protein resides in the secreted. Its function is as follows. Has hemolytic activity against human erythrocytes (HC50=14.3 uM). Has antibacterial activity against the Gram-positive bacterium S.aureus ATCC 25923 (MIC=64 uM) and the Gram-negative bacterium E.coli ATCC 25922 (MIC=64 uM). This is Ocellatin-4 from Leptodactylus ocellatus (Argus frog).